The chain runs to 179 residues: ATP-dependent protease subunit HslV (179 aa).

The active site involves Thr-6. Residues Ser-162, Cys-165, and Thr-168 each contribute to the Na(+) site.

It belongs to the peptidase T1B family. HslV subfamily. In terms of assembly, a double ring-shaped homohexamer of HslV is capped on each side by a ring-shaped HslU homohexamer. The assembly of the HslU/HslV complex is dependent on binding of ATP.

The protein localises to the cytoplasm. It carries out the reaction ATP-dependent cleavage of peptide bonds with broad specificity.. Its activity is regulated as follows. Allosterically activated by HslU binding. Functionally, protease subunit of a proteasome-like degradation complex believed to be a general protein degrading machinery. This is ATP-dependent protease subunit HslV from Maridesulfovibrio salexigens (strain ATCC 14822 / DSM 2638 / NCIMB 8403 / VKM B-1763) (Desulfovibrio salexigens).